The following is a 164-amino-acid chain: Pyruvoyl-dependent arginine decarboxylase (164 aa).

Pyruvic acid (Ser) is present on S52.

Belongs to the PdaD family. Pyruvate is required as a cofactor.

The enzyme catalyses L-arginine + H(+) = agmatine + CO2. This chain is Pyruvoyl-dependent arginine decarboxylase, found in Methanococcus vannielii (strain ATCC 35089 / DSM 1224 / JCM 13029 / OCM 148 / SB).